The following is a 401-amino-acid chain: Chaperone protein DnaJ (401 aa).

The J domain occupies 4–69; it reads DYYEVLGVSR…DKRRRYDQFG (66 aa). The CR-type zinc finger occupies 156 to 237; sequence GVEKTLKIKK…CYGEGIKQGD (82 aa). The Zn(2+) site is built by C169, C172, C185, C188, C211, C214, C225, and C228. CXXCXGXG motif repeat units lie at residues 169–176, 185–192, 211–218, and 225–232; these read CKECNGSG, CQTCHGSG, CPTCGGEG, and CTACYGEG. A disordered region spans residues 377 to 401; the sequence is AFSPSGSNNDKEEKSFFEKARDIFS. Residues 385–401 show a composition bias toward basic and acidic residues; that stretch reads NDKEEKSFFEKARDIFS.

Belongs to the DnaJ family. As to quaternary structure, homodimer. It depends on Zn(2+) as a cofactor.

It localises to the cytoplasm. In terms of biological role, participates actively in the response to hyperosmotic and heat shock by preventing the aggregation of stress-denatured proteins and by disaggregating proteins, also in an autonomous, DnaK-independent fashion. Unfolded proteins bind initially to DnaJ; upon interaction with the DnaJ-bound protein, DnaK hydrolyzes its bound ATP, resulting in the formation of a stable complex. GrpE releases ADP from DnaK; ATP binding to DnaK triggers the release of the substrate protein, thus completing the reaction cycle. Several rounds of ATP-dependent interactions between DnaJ, DnaK and GrpE are required for fully efficient folding. Also involved, together with DnaK and GrpE, in the DNA replication of plasmids through activation of initiation proteins. This chain is Chaperone protein DnaJ, found in Chlorobium limicola (strain DSM 245 / NBRC 103803 / 6330).